The chain runs to 354 residues: MYGNNNPGSNNNNGGYPPYGYNNKSSGGRGFGMSHSLPSGMSRYAFSPQDTEFSFPSSSSRRGYNDFPGCGGSGGNGGSANNLGGGNMCHLPPMASNNSLNNLCGLSLGSGGSDDLMNDPRASNTNLIVNYLPQDMTDRELYALFRAIGPINTCRIMRDYKTGYSFGYAFVDFTSEMDSQRAIKVLNGITVRNKRLKVSYARPGGESIKDTNLYVTNLPRTITDDQLDTIFGKYGSIVQKNILRDKLTGRPRGVAFVRYNKREEAQEAISALNNVIPEGGSQPLSVRLAEEHGKAKAAHFMSQMGVVPANVPPPPPQPPAHMAAAFNMMHRGRSIKSQQRFQNSHPYFDAKKFI.

A disordered region spans residues 1-21 (MYGNNNPGSNNNNGGYPPYGY). 2 consecutive RRM domains span residues 125-203 (TNLI…YARP) and 211-291 (TNLY…LAEE).

In terms of assembly, part of a complex containing fl(2)d, Sxl and vir. Part of a complex composed of at least mei-P26, bam, bgcn and Sxl; this complex is involved in translational repression of nanos mRNA. interacts with mei-p26. Interacts with nito. Interacts with Unr; cooperates with Unr to prevent translation of msl-2 transcripts. Interacts with how; promoting nuclear retention of msl-2 transcripts. Expressed in somatic tissues, but not in the pole cells, which are the precursors of the germline. Expressed in the anterior of the germarium.

The protein resides in the nucleus. The protein localises to the cytoplasm. In terms of biological role, sex determination switch protein, which controls sexual development and dosage compensation in females. Sxl protein is only active in females: it is inactive in males throughout development. Acts as a mRNA-binding protein, which specifically binds to a subset of pre-mRNAs and mRNAs and regulates their processing and/or translation. Binds nanos mRNA and is involved in bam-bgcn mediated repression of nanos mRNA translation. Promotes sexual development by controlling the female-specific alternative splicing of the transformer (tra) pre-mRNA: binds tightly to a characteristic uridine-rich polypyrimidine tract at the non-sex specific 3' splice site in one of the tra introns, preventing the general splicing factor U2AF from binding to this site and forcing it to bind to the female-specific 3' splice site. Acts as an inhibitor of dosage compensation in females by preventing production of msl-2 protein, an essential component of the MSL complex, the complex that mediates X-chromosome dosage compensation. Specifically binds to uridine stretches in both the 5'- and 3'-UTR of msl-2 transcripts. Sxl first acts at the splicing level by promoting retention of an intron in the 5' UTR of msl-2 pre-mRNA. The retained intron contains Sxl-binding sites that are required for subsequent steps of repression: after msl-2 mRNA export into the cytoplasm, Sxl coordinates its translational repression by targeting early steps of translation initiation. Together with how, Sxl also prevents production of msl-2 protein by preventing nuclear export of msl-2 transcripts. Embryo-specific product, which is expressed early only in female embryos and specifies female-adult specific splicing. The polypeptide is Protein sex-lethal (Drosophila melanogaster (Fruit fly)).